The primary structure comprises 336 residues: GTPase Obg (336 aa).

One can recognise an Obg domain in the interval 1–159 (MKFLDETKVY…KTIWLRLKLI (159 aa)). One can recognise an OBG-type G domain in the interval 160-327 (ADAGLVGLPN…TLRALRSVID (168 aa)). GTP-binding positions include 166–173 (GLPNAGKS), 191–195 (FTTLH), 212–215 (DIPG), 279–282 (SQID), and 308–310 (SAV). Residues Ser-173 and Thr-193 each contribute to the Mg(2+) site.

It belongs to the TRAFAC class OBG-HflX-like GTPase superfamily. OBG GTPase family. Monomer. Mg(2+) is required as a cofactor.

Its subcellular location is the cytoplasm. Functionally, an essential GTPase which binds GTP, GDP and possibly (p)ppGpp with moderate affinity, with high nucleotide exchange rates and a fairly low GTP hydrolysis rate. Plays a role in control of the cell cycle, stress response, ribosome biogenesis and in those bacteria that undergo differentiation, in morphogenesis control. This is GTPase Obg from Sinorhizobium medicae (strain WSM419) (Ensifer medicae).